The chain runs to 608 residues: Albumin (608 aa).

Residues 1–18 (MKWVTFISLLLLFSSAYS) form the signal peptide. Residues 19–24 (RGVTRR) constitute a propeptide that is removed on maturation. 3 consecutive Albumin domains span residues 19-210 (RGVT…DALR), 211-403 (EKVL…EFKP), and 404-601 (LVEE…KLVA). Residue histidine 27 participates in Cu cation binding. Serine 29 is modified (phosphoserine). Ca(2+)-binding residues include glutamate 30 and aspartate 37. An intrachain disulfide couples cysteine 77 to cysteine 86. A phosphoserine mark is found at serine 82 and serine 89. Position 91 (histidine 91) interacts with Zn(2+). Intrachain disulfides connect cysteine 99/cysteine 115, cysteine 114/cysteine 125, cysteine 148/cysteine 193, cysteine 192/cysteine 201, cysteine 224/cysteine 270, and cysteine 269/cysteine 277. Lysine 229 is subject to N6-succinyllysine. Glutamate 268 serves as a coordination point for Ca(2+). Residues histidine 271 and aspartate 273 each contribute to the Zn(2+) site. Ca(2+)-binding residues include aspartate 273, glutamate 276, aspartate 279, and aspartate 283. Cystine bridges form between cysteine 289-cysteine 303, cysteine 302-cysteine 313, cysteine 340-cysteine 385, cysteine 384-cysteine 393, cysteine 416-cysteine 462, cysteine 461-cysteine 472, cysteine 485-cysteine 501, and cysteine 500-cysteine 511. Position 443 is a phosphoserine (serine 443). Phosphothreonine is present on residues threonine 444 and threonine 446. The residue at position 460 (lysine 460) is an N6-succinyllysine. Serine 513 is subject to Phosphoserine. 2 disulfide bridges follow: cysteine 538–cysteine 583 and cysteine 582–cysteine 591. Lysine 558 is subject to N6-methyllysine. Threonine 570 bears the Phosphothreonine mark. Lysine 588 carries the N6-succinyllysine modification.

Belongs to the ALB/AFP/VDB family. As to quaternary structure, interacts with FCGRT; this interaction regulates ALB homeostasis. Interacts with TASOR. In plasma, occurs in a covalently-linked complex with chromophore-bound alpha-1-microglobulin; this interaction does not prevent fatty acid binding to ALB. Phosphorylated by FAM20C in the extracellular medium. In terms of tissue distribution, plasma.

It is found in the secreted. Its function is as follows. Binds water, Ca(2+), Na(+), K(+), fatty acids, hormones, bilirubin and drugs. Its main function is the regulation of the colloidal osmotic pressure of blood. Major zinc transporter in plasma, typically binds about 80% of all plasma zinc. Major calcium and magnesium transporter in plasma, binds approximately 45% of circulating calcium and magnesium in plasma. Potentially has more than two calcium-binding sites and might additionally bind calcium in a non-specific manner. The shared binding site between zinc and calcium at residue Asp-273 suggests a crosstalk between zinc and calcium transport in the blood. The rank order of affinity is zinc &gt; calcium &gt; magnesium. Binds to the bacterial siderophore enterobactin and inhibits enterobactin-mediated iron uptake of E.coli from ferric transferrin, and may thereby limit the utilization of iron and growth of enteric bacteria such as E.coli. Does not prevent iron uptake by the bacterial siderophore aerobactin. This Felis catus (Cat) protein is Albumin (ALB).